A 34-amino-acid polypeptide reads, in one-letter code: Sperm protein EM1 (34 aa).

Residues 1–17 (AGSKSRSRSRSRSRSKS) show a composition bias toward basic residues. The segment at 1 to 34 (AGSKSRSRSRSRSRSKSPAKSASPKSAASPRASR) is disordered. 7 repeat units span residues 3–4 (SK), 5–6 (SR), 7–8 (SR), 9–10 (SR), 11–12 (SR), 13–14 (SR), and 15–16 (SK). A 7 X 2 AA tandem repeats of S-[KR] region spans residues 3 to 16 (SKSRSRSRSRSRSK). The span at 18-34 (PAKSASPKSAASPRASR) shows a compositional bias: low complexity.

In terms of tissue distribution, sperm.

The protein localises to the nucleus. The chain is Sperm protein EM1 from Ensis minor (Razor shell).